A 373-amino-acid polypeptide reads, in one-letter code: Leucine-, isoleucine-, valine-, threonine-, and alanine-binding protein (373 aa).

Positions 1–26 (MKKGTQRLSRLFAAMAIAGFASYSMA) are cleaved as a signal peptide. Cysteine 80 and cysteine 105 are joined by a disulfide.

This sequence belongs to the leucine-binding protein family.

It is found in the periplasm. Component of the high-affinity leucine, isoleucine, valine transport system I (LIV-I), which is operative without Na(+) and is specific for alanine and threonine, in addition to branched-chain amino acids. Binds L-leucine, L-isoleucine, L-valine, L-threonine and L-alanine with nanomolar affinities. Can also bind L-homoserine with high affinity. The protein is Leucine-, isoleucine-, valine-, threonine-, and alanine-binding protein (braC) of Pseudomonas aeruginosa (strain ATCC 15692 / DSM 22644 / CIP 104116 / JCM 14847 / LMG 12228 / 1C / PRS 101 / PAO1).